The primary structure comprises 821 residues: Calpain-3 (821 aa).

Residues 1-34 (MPTVISASMAPRTGASQVPRTMPQAAQGKGTEAG) form a disordered region. The Calpain catalytic domain maps to 73–417 (LYLDPEFPPD…FTKLEICNLT (345 aa)). Active-site residues include Cys128, His334, and Asn358. The segment at 418–586 (ADALESDKLQ…KRNLSEEVEN (169 aa)) is domain III. A linker region spans residues 587–649 (TISVDRPVRK…EPSNTDQESE (63 aa)). Positions 603–652 (IFVSDRANSNKELGVDQESEEGQDKTSPDKQEKSPKPEPSNTDQESEEQQ) are disordered. The span at 624–638 (GQDKTSPDKQEKSPK) shows a compositional bias: basic and acidic residues. Over residues 641-652 (PSNTDQESEEQQ) the composition is skewed to polar residues. 4 consecutive EF-hand domains span residues 649-683 (EEQQ…VVNK), 692-725 (FTLE…KKIK), 722-757 (KKIK…AGFH), and 787-821 (VRLE…TMYA). The tract at residues 650–821 (EQQQFRNIFR…LEWLQLTMYA (172 aa)) is domain IV. Ca(2+) is bound by residues Ala662, Asp665, Glu667, Glu672, Asp705, Asp707, Ser709, Arg711, Glu716, Asp735, Asp737, Ser739, Thr741, Glu746, Asp800, Asp802, Asp804, and Ile806.

This sequence belongs to the peptidase C2 family. As to quaternary structure, homodimer; via EF-hand domain 4. Interacts with TTN/titin. Interacts with CMYA5; this interaction, which results in CMYA5 proteolysis, may protect CAPN3 from autolysis. Interacts with SIMC1. Interacts with UTP25; the interaction is required for CAPN3 translocation to the nucleolus. As to expression, skeletal muscle.

The protein localises to the cytoplasm. It localises to the nucleus. It is found in the nucleolus. The catalysed reaction is Broad endopeptidase activity.. Its activity is regulated as follows. Activated by micromolar concentrations of calcium and inhibited by calpastatin. Calcium-regulated non-lysosomal thiol-protease. Proteolytically cleaves CTBP1. Mediates, with UTP25, the proteasome-independent degradation of p53/TP53. The polypeptide is Calpain-3 (CAPN3) (Sus scrofa (Pig)).